The primary structure comprises 817 residues: Leucine--tRNA ligase (817 aa).

The short motif at proline 42 to histidine 52 is the 'HIGH' region element. The short motif at lysine 576 to serine 580 is the 'KMSKS' region element. Lysine 579 contacts ATP.

Belongs to the class-I aminoacyl-tRNA synthetase family.

The protein localises to the cytoplasm. The enzyme catalyses tRNA(Leu) + L-leucine + ATP = L-leucyl-tRNA(Leu) + AMP + diphosphate. In Thioalkalivibrio sulfidiphilus (strain HL-EbGR7), this protein is Leucine--tRNA ligase.